The primary structure comprises 253 residues: LexA repressor (253 aa).

The segment at 1 to 33 (MTSQGRGTRRGGARGNVRAFPENPADAAGLTPR) is disordered. The segment at residues 54–74 (VREIGEAVGLTSTSSVAHQLK) is a DNA-binding region (H-T-H motif). Catalysis depends on for autocatalytic cleavage activity residues serine 177 and lysine 214.

This sequence belongs to the peptidase S24 family. Homodimer.

It catalyses the reaction Hydrolysis of Ala-|-Gly bond in repressor LexA.. Its function is as follows. Represses a number of genes involved in the response to DNA damage (SOS response), including recA and lexA. In the presence of single-stranded DNA, RecA interacts with LexA causing an autocatalytic cleavage which disrupts the DNA-binding part of LexA, leading to derepression of the SOS regulon and eventually DNA repair. The polypeptide is LexA repressor (Frankia alni (strain DSM 45986 / CECT 9034 / ACN14a)).